We begin with the raw amino-acid sequence, 350 residues long: uncharacterized protein (350 aa).

The signal sequence occupies residues 1 to 26; it reads MKKSGWLVVALIALVVLGVVTSIAVN.

This is an uncharacterized protein from Archaeoglobus fulgidus (strain ATCC 49558 / DSM 4304 / JCM 9628 / NBRC 100126 / VC-16).